Here is a 212-residue protein sequence, read N- to C-terminus: ATP-dependent dethiobiotin synthetase BioD (212 aa).

An ATP-binding site is contributed by 13–18; it reads GIGKTV. Residue Thr17 participates in Mg(2+) binding. Residue Lys33 is part of the active site. Residue Glu100 participates in Mg(2+) binding. ATP is bound by residues 100-103 and 184-186; these read EGAG and PHV.

This sequence belongs to the dethiobiotin synthetase family. As to quaternary structure, homodimer. Requires Mg(2+) as cofactor.

The protein resides in the cytoplasm. It carries out the reaction (7R,8S)-7,8-diammoniononanoate + CO2 + ATP = (4R,5S)-dethiobiotin + ADP + phosphate + 3 H(+). The protein operates within cofactor biosynthesis; biotin biosynthesis; biotin from 7,8-diaminononanoate: step 1/2. Functionally, catalyzes a mechanistically unusual reaction, the ATP-dependent insertion of CO2 between the N7 and N8 nitrogen atoms of 7,8-diaminopelargonic acid (DAPA, also called 7,8-diammoniononanoate) to form a ureido ring. The sequence is that of ATP-dependent dethiobiotin synthetase BioD from Nitrobacter hamburgensis (strain DSM 10229 / NCIMB 13809 / X14).